We begin with the raw amino-acid sequence, 282 residues long: Putative hydrolase BamMC406_5393 (282 aa).

Mg(2+) is bound by residues Glu-124, Glu-126, and Asp-155.

The protein belongs to the FAH family. Mg(2+) serves as cofactor.

This chain is Putative hydrolase BamMC406_5393, found in Burkholderia ambifaria (strain MC40-6).